The chain runs to 850 residues: Bifunctional levopimaradiene synthase, chloroplastic (850 aa).

The transit peptide at 1–52 directs the protein to the chloroplast; it reads MALPSSSLSSQIHTGATTQCIPHFHGSLNAGTSAGKRRSLYLRWGKGPSKIV. K250 lines the substrate pocket. Residues D383 and D385 each contribute to the Mg(2+) site. Positions 383-386 match the DXDD motif motif; sequence DIDD. Residue K470 participates in substrate binding. Mg(2+)-binding residues include D602, D606, N746, T750, and E754. Positions 602–606 match the DDXXD motif motif; that stretch reads DDLYD.

It belongs to the terpene synthase family. Tpsd subfamily. Requires Mg(2+) as cofactor.

Its subcellular location is the plastid. It is found in the chloroplast. The catalysed reaction is (2E,6E,10E)-geranylgeranyl diphosphate = (+)-copalyl diphosphate. It catalyses the reaction (+)-copalyl diphosphate = abieta-7,13-diene + diphosphate. The enzyme catalyses (+)-copalyl diphosphate = abieta-8(14),12-diene + diphosphate. It carries out the reaction (+)-copalyl diphosphate = neoabietadiene + diphosphate. Its pathway is terpene metabolism; oleoresin biosynthesis. Its function is as follows. Involved in defensive oleoresin formation in conifers in response to insect attack or other injury. Involved in diterpene (C20) olefins biosynthesis. Bifunctional enzyme that catalyzes two sequential cyclizations of geranylgeranyl diphosphate (GGPP) to levopimaradiene. Levopimaradiene is the major products of the enzyme with abietadiene and neoabietadiene. No activity with farnesyl diphosphate (FPP) as substrate. The protein is Bifunctional levopimaradiene synthase, chloroplastic of Pinus contorta (Shore pine).